Consider the following 533-residue polypeptide: Frizzled/smoothened-like sans CRD protein H (533 aa).

The signal sequence occupies residues 1–21 (MFIKFYFFIIFLILNFKNNYA). Residues 22–103 (SPTLLDSVLS…GDWTTMMDMS (82 aa)) are Extracellular-facing. A glycan (N-linked (GlcNAc...) asparagine) is linked at Asn-76. Residues 104 to 124 (LIVATISFFASIFLILTYSPL) form a helical membrane-spanning segment. The Cytoplasmic portion of the chain corresponds to 125–134 (MNPSYNNRHT). Residues 135 to 155 (IGILSMSFGIFLIMFTDMYNL) traverse the membrane as a helical segment. Topologically, residues 156 to 177 (KKRFTLGCPSETRYAIQNDADC) are extracellular. Residues 178 to 198 (LITGLIFQFGCVSAVFFWTAL) form a helical membrane-spanning segment. Over 199–216 (SLDLYFQITNRNISRKYD) the chain is Cytoplasmic. A helical transmembrane segment spans residues 217-237 (LYYFIGVNLISLIFTFVPVIS). The Extracellular portion of the chain corresponds to 238–259 (KSYGYGDFALGCWILDFNYALG). Residues 260–280 (CFWIPLSVCLIFSTVVVLMIL) form a helical membrane-spanning segment. Residues 281–302 (YEVYKIYKASNQKTSLKGHIKP) lie on the Cytoplasmic side of the membrane. Residues 303-323 (LLCLISNCFEFFYVFGYSLYL) traverse the membrane as a helical segment. Residues 324 to 360 (ATKLTELHDNMDAYIKCLFLNSQNDPDSYTCPDHRLK) are Extracellular-facing. Residues 361–381 (LGPQFLFFLSLRLLGVSGIVF) traverse the membrane as a helical segment. Over 382-533 (YGTNSKVRKI…LTNINTIDNV (152 aa)) the chain is Cytoplasmic. Positions 454–533 (IIVTPGGDDD…LTNINTIDNV (80 aa)) are disordered. The span at 466–518 (NNNNNNNNNNNNNNNNNNNNNNNNNNNNNNNNNNNNNNNNNNNNNSNENNENN) shows a compositional bias: low complexity. Residues 501–528 (NNNNNNNNNNSNENNENNTQEIELTNIN) are a coiled coil. Positions 519–533 (TQEIELTNINTIDNV) are enriched in polar residues.

Belongs to the G-protein coupled receptor Fz/Smo family.

The protein resides in the membrane. This Dictyostelium discoideum (Social amoeba) protein is Frizzled/smoothened-like sans CRD protein H (fscH).